The sequence spans 267 residues: Acyl-[acyl-carrier-protein]--UDP-N-acetylglucosamine O-acyltransferase (267 aa).

This sequence belongs to the transferase hexapeptide repeat family. LpxA subfamily. Homotrimer.

The protein localises to the cytoplasm. It carries out the reaction a (3R)-hydroxyacyl-[ACP] + UDP-N-acetyl-alpha-D-glucosamine = a UDP-3-O-[(3R)-3-hydroxyacyl]-N-acetyl-alpha-D-glucosamine + holo-[ACP]. It functions in the pathway glycolipid biosynthesis; lipid IV(A) biosynthesis; lipid IV(A) from (3R)-3-hydroxytetradecanoyl-[acyl-carrier-protein] and UDP-N-acetyl-alpha-D-glucosamine: step 1/6. Functionally, involved in the biosynthesis of lipid A, a phosphorylated glycolipid that anchors the lipopolysaccharide to the outer membrane of the cell. The polypeptide is Acyl-[acyl-carrier-protein]--UDP-N-acetylglucosamine O-acyltransferase (Cupriavidus pinatubonensis (strain JMP 134 / LMG 1197) (Cupriavidus necator (strain JMP 134))).